The primary structure comprises 293 residues: tRNA pseudouridine synthase B (293 aa).

D38 functions as the Nucleophile in the catalytic mechanism.

The protein belongs to the pseudouridine synthase TruB family. Type 1 subfamily.

It catalyses the reaction uridine(55) in tRNA = pseudouridine(55) in tRNA. Its function is as follows. Responsible for synthesis of pseudouridine from uracil-55 in the psi GC loop of transfer RNAs. The chain is tRNA pseudouridine synthase B from Trichormus variabilis (strain ATCC 29413 / PCC 7937) (Anabaena variabilis).